Consider the following 279-residue polypeptide: HTH-type transcriptional regulator HdfR (279 aa).

Positions 1–58 constitute an HTH lysR-type domain; sequence MDTELLKTFLEVSRTRHFGRAAESLYLTQSAVSFRIRQLENQLGVNLFTRHRNNIRLT. The H-T-H motif DNA-binding region spans 18 to 37; that stretch reads FGRAAESLYLTQSAVSFRIR.

The protein belongs to the LysR transcriptional regulatory family.

Functionally, negatively regulates the transcription of the flagellar master operon flhDC by binding to the upstream region of the operon. This chain is HTH-type transcriptional regulator HdfR, found in Escherichia fergusonii (strain ATCC 35469 / DSM 13698 / CCUG 18766 / IAM 14443 / JCM 21226 / LMG 7866 / NBRC 102419 / NCTC 12128 / CDC 0568-73).